The sequence spans 360 residues: Phospho-N-acetylmuramoyl-pentapeptide-transferase (360 aa).

Transmembrane regions (helical) follow at residues 21 to 41 (YVTF…LWWG), 74 to 94 (MGGL…GDLG), 97 to 117 (YVWV…IDDY), 135 to 155 (LLQS…ADTA), 168 to 188 (VMPQ…VGSS), 199 to 219 (GLAI…AYLS), 236 to 256 (AGEL…FLWF), 263 to 283 (VFMG…IAVL), 288 to 308 (ILLV…ILQV), and 338 to 358 (VIVR…ATLK).

It belongs to the glycosyltransferase 4 family. MraY subfamily. Mg(2+) is required as a cofactor.

The protein resides in the cell inner membrane. It catalyses the reaction UDP-N-acetyl-alpha-D-muramoyl-L-alanyl-gamma-D-glutamyl-meso-2,6-diaminopimeloyl-D-alanyl-D-alanine + di-trans,octa-cis-undecaprenyl phosphate = di-trans,octa-cis-undecaprenyl diphospho-N-acetyl-alpha-D-muramoyl-L-alanyl-D-glutamyl-meso-2,6-diaminopimeloyl-D-alanyl-D-alanine + UMP. It functions in the pathway cell wall biogenesis; peptidoglycan biosynthesis. In terms of biological role, catalyzes the initial step of the lipid cycle reactions in the biosynthesis of the cell wall peptidoglycan: transfers peptidoglycan precursor phospho-MurNAc-pentapeptide from UDP-MurNAc-pentapeptide onto the lipid carrier undecaprenyl phosphate, yielding undecaprenyl-pyrophosphoryl-MurNAc-pentapeptide, known as lipid I. The chain is Phospho-N-acetylmuramoyl-pentapeptide-transferase from Shewanella piezotolerans (strain WP3 / JCM 13877).